Consider the following 121-residue polypeptide: Heme-degrading monooxygenase (121 aa).

Positions 2 to 101 constitute an ABM domain; the sequence is IIVTNTIKVE…EQREDRKGIV (100 aa). Fe cation is bound at residue N6. Residues 76–98 form a disordered region; sequence KSDSFKKAHGRTKDTREQREDRK. Positions 78–98 are enriched in basic and acidic residues; that stretch reads DSFKKAHGRTKDTREQREDRK. H84 provides a ligand contact to heme.

The protein belongs to the antibiotic biosynthesis monooxygenase family. Heme-degrading monooxygenase IsdG subfamily. As to quaternary structure, homodimer.

It is found in the cytoplasm. It catalyses the reaction heme b + 3 reduced [NADPH--hemoprotein reductase] + 3 O2 = biliverdin IXalpha + CO + Fe(2+) + 3 oxidized [NADPH--hemoprotein reductase] + 3 H2O + H(+). In terms of biological role, allows bacterial pathogens to use the host heme as an iron source. Catalyzes the oxidative degradation of the heme macrocyclic porphyrin ring to the biliverdin in the presence of a suitable electron donor such as ascorbate or NADPH--cytochrome P450 reductase, with subsequent release of free iron. The protein is Heme-degrading monooxygenase of Listeria welshimeri serovar 6b (strain ATCC 35897 / DSM 20650 / CCUG 15529 / CIP 8149 / NCTC 11857 / SLCC 5334 / V8).